The sequence spans 517 residues: MTCGFSRADRSPYHGPVTSTVARDVSGVRTYQVRTYGCQMNVHDSERLAGLLEAAGYRRAAEGAEVADVVVFNTCAVRENADNKLYGNLSHLAPRKRGNPEMQIAVGGCLAQKDREAVLRRAPWVDVVFGTHNIGSLPTLLERARHNKAAQVEIAEALQQFPSSLPSARESAYAAWVSISVGCNNSCTFCIVPSLRGKEVDRSPDDILAEVRSLVADGVLEVTLLGQNVNAYGVSFADPALPRDRGAFARLLRACGEIDGLERVRFTSPHPAEFTDDVIEAMAQTPNVCPALHMPLQSGSDRVLRAMRRSYRAERFLGIIDRVRAAMPHAAITTDLIVGFPGETEEDFAATLDVVRRARFAAAFTFQYSKRPGTPAAELDGQIPKAVVQERYERLVELQESISLQGNQALVGQTVELLVATGEGRKDSATARMSGRARDGRLVHFAADDRVRPGDLVTTVITGAAPHHLIADAGVLSHRRTRAGDAHAAGRRPRGVGLGMPAVGPPAGPAQPVGCAS.

In terms of domain architecture, MTTase N-terminal spans 29-146 (RTYQVRTYGC…LPTLLERARH (118 aa)). 6 residues coordinate [4Fe-4S] cluster: C38, C75, C109, C183, C187, and C190. The Radical SAM core domain maps to 169–405 (RESAYAAWVS…VELQESISLQ (237 aa)). The 68-residue stretch at 408–475 (QALVGQTVEL…PHHLIADAGV (68 aa)) folds into the TRAM domain.

This sequence belongs to the methylthiotransferase family. MiaB subfamily. In terms of assembly, monomer. It depends on [4Fe-4S] cluster as a cofactor.

It is found in the cytoplasm. It carries out the reaction N(6)-dimethylallyladenosine(37) in tRNA + (sulfur carrier)-SH + AH2 + 2 S-adenosyl-L-methionine = 2-methylsulfanyl-N(6)-dimethylallyladenosine(37) in tRNA + (sulfur carrier)-H + 5'-deoxyadenosine + L-methionine + A + S-adenosyl-L-homocysteine + 2 H(+). Its function is as follows. Catalyzes the methylthiolation of N6-(dimethylallyl)adenosine (i(6)A), leading to the formation of 2-methylthio-N6-(dimethylallyl)adenosine (ms(2)i(6)A) at position 37 in tRNAs that read codons beginning with uridine. The protein is tRNA-2-methylthio-N(6)-dimethylallyladenosine synthase of Mycolicibacterium paratuberculosis (strain ATCC BAA-968 / K-10) (Mycobacterium paratuberculosis).